The sequence spans 334 residues: N-acetyl-gamma-glutamyl-phosphate reductase (334 aa).

Cys-154 is a catalytic residue.

Belongs to the NAGSA dehydrogenase family. Type 1 subfamily.

It localises to the cytoplasm. It carries out the reaction N-acetyl-L-glutamate 5-semialdehyde + phosphate + NADP(+) = N-acetyl-L-glutamyl 5-phosphate + NADPH + H(+). It functions in the pathway amino-acid biosynthesis; L-arginine biosynthesis; N(2)-acetyl-L-ornithine from L-glutamate: step 3/4. Its function is as follows. Catalyzes the NADPH-dependent reduction of N-acetyl-5-glutamyl phosphate to yield N-acetyl-L-glutamate 5-semialdehyde. The protein is N-acetyl-gamma-glutamyl-phosphate reductase of Salmonella typhi.